The following is a 69-amino-acid chain: uncharacterized protein (69 aa).

The stretch at 21-64 (LNLLKGGEEKISEVELKLDEMEKKMDSLLVQLEDLHRDNNDLAK) forms a coiled coil.

This is an uncharacterized protein from Saccharomyces cerevisiae (strain ATCC 204508 / S288c) (Baker's yeast).